The following is a 313-amino-acid chain: tRNA dimethylallyltransferase (313 aa).

Residue 17 to 24 (GPTASGKT) participates in ATP binding. 19–24 (TASGKT) provides a ligand contact to substrate. 4 interaction with substrate tRNA regions span residues 42-45 (DSAL), 166-170 (QRLSR), 247-252 (RCVGYR), and 280-287 (KRQITWLR).

This sequence belongs to the IPP transferase family. As to quaternary structure, monomer. Mg(2+) serves as cofactor.

The enzyme catalyses adenosine(37) in tRNA + dimethylallyl diphosphate = N(6)-dimethylallyladenosine(37) in tRNA + diphosphate. In terms of biological role, catalyzes the transfer of a dimethylallyl group onto the adenine at position 37 in tRNAs that read codons beginning with uridine, leading to the formation of N6-(dimethylallyl)adenosine (i(6)A). The sequence is that of tRNA dimethylallyltransferase from Photorhabdus laumondii subsp. laumondii (strain DSM 15139 / CIP 105565 / TT01) (Photorhabdus luminescens subsp. laumondii).